The chain runs to 409 residues: Triose phosphate/phosphate translocator, chloroplastic (409 aa).

Residues 1–85 (MSALGTLSGG…ARRHTLQPPA (85 aa)) constitute a chloroplast transit peptide. Over 86–104 (AAAESAGEAKSVGFLEKYP) the chain is Chloroplast intermembrane. Residues 105–125 (ALVTGFFFFMWYFLNVIFNIL) form a helical membrane-spanning segment. Over 126–137 (NKKIYNYFPYPY) the chain is Lumenal. A helical membrane pass occupies residues 138 to 158 (FVSLIHLVVGVVYCLISWSVG). Over 159–215 (LPKRAPINGTLLKLLFPVALCHGIGHITSNVSFAAVAVSFAHTIKALEPFFSAAATQ) the chain is Chloroplast intermembrane. Residues 216 to 236 (FILGQQVPFSLWLSLAPVVIG) form a helical membrane-spanning segment. Residues 237–280 (VSMASLTELSFNWTGFINAMISNISFTYRSIYSKKAMTDMDSTN) are Lumenal-facing. The chain crosses the membrane as a helical span at residues 281–300 (VYAYISIIALIVCIPPALIF). Topologically, residues 301 to 378 (EGPKLMQHGF…IVFGNKISTQ (78 aa)) are chloroplast intermembrane. A helical membrane pass occupies residues 379–399 (TGIGTSIAIAGVAMYSYIKAK). Topologically, residues 400–409 (IEEEKRKKSA) are lumenal.

The protein belongs to the TPT transporter family. TPT (TC 2.A.7.9) subfamily. Homodimer.

The protein localises to the plastid. It localises to the chloroplast membrane. Functionally, mediates the export of fixed carbons from the chloroplasts into the cytosol in the form of triose phosphates. In addition, it can also bind and transport phosphoenolpyruvate, thereby increasing the photosynthetic efficiency of C4-plants. The polypeptide is Triose phosphate/phosphate translocator, chloroplastic (TPT) (Zea mays (Maize)).